A 450-amino-acid chain; its full sequence is Neuraminidase (450 aa).

Topologically, residues 1–6 (MNPNQK) are intravirion. Residues 7–27 (IITIGSICMVVGIISLMLQIG) form a helical membrane-spanning segment. The tract at residues 11–33 (GSICMVVGIISLMLQIGNIISVW) is involved in apical transport and lipid raft association. At 28-450 (NIISVWVSHI…GAELPFTIDK (423 aa)) the chain is on the virion surface side. The tract at residues 36–71 (HIIQTWHPNQPEPCNQSINFYTEQAAASVTLAGNSS) is hypervariable stalk region. 2 N-linked (GlcNAc...) asparagine; by host glycosylation sites follow: asparagine 50 and asparagine 69. The segment at 72 to 450 (LCPISGWAIY…GAELPFTIDK (379 aa)) is head of neuraminidase. Intrachain disulfides connect cysteine 73–cysteine 398, cysteine 105–cysteine 110, cysteine 165–cysteine 212, cysteine 214–cysteine 219, cysteine 260–cysteine 273, cysteine 262–cysteine 271, cysteine 299–cysteine 316, and cysteine 402–cysteine 427. Arginine 99 lines the substrate pocket. Asparagine 127 carries N-linked (GlcNAc...) asparagine; by host glycosylation. Residue aspartate 132 is the Proton donor/acceptor of the active site. A substrate-binding site is contributed by arginine 133. A glycan (N-linked (GlcNAc...) asparagine; by host) is linked at asparagine 216. 258 to 259 (EE) is a binding site for substrate. A substrate-binding site is contributed by arginine 274. Residues aspartate 275, glycine 279, and aspartate 305 each contribute to the Ca(2+) site. Residue arginine 349 coordinates substrate. Tyrosine 383 acts as the Nucleophile in catalysis.

It belongs to the glycosyl hydrolase 34 family. Homotetramer. Ca(2+) serves as cofactor. Post-translationally, N-glycosylated.

It is found in the virion membrane. It localises to the host apical cell membrane. It catalyses the reaction Hydrolysis of alpha-(2-&gt;3)-, alpha-(2-&gt;6)-, alpha-(2-&gt;8)- glycosidic linkages of terminal sialic acid residues in oligosaccharides, glycoproteins, glycolipids, colominic acid and synthetic substrates.. Inhibited by the neuraminidase inhibitors zanamivir (Relenza) and oseltamivir (Tamiflu). These drugs interfere with the release of progeny virus from infected cells and are effective against all influenza strains. Resistance to neuraminidase inhibitors is quite rare. Its function is as follows. Catalyzes the removal of terminal sialic acid residues from viral and cellular glycoconjugates. Cleaves off the terminal sialic acids on the glycosylated HA during virus budding to facilitate virus release. Additionally helps virus spread through the circulation by further removing sialic acids from the cell surface. These cleavages prevent self-aggregation and ensure the efficient spread of the progeny virus from cell to cell. Otherwise, infection would be limited to one round of replication. Described as a receptor-destroying enzyme because it cleaves a terminal sialic acid from the cellular receptors. May facilitate viral invasion of the upper airways by cleaving the sialic acid moieties on the mucin of the airway epithelial cells. Likely to plays a role in the budding process through its association with lipid rafts during intracellular transport. May additionally display a raft-association independent effect on budding. Plays a role in the determination of host range restriction on replication and virulence. Sialidase activity in late endosome/lysosome traffic seems to enhance virus replication. The sequence is that of Neuraminidase from Aves (Cat).